The following is a 356-amino-acid chain: Glutamine synthetase cytosolic isozyme (356 aa).

Positions 19–99 (IIAEYIWIGG…VMCDAYTPAG (81 aa)) constitute a GS beta-grasp domain. The disordered stretch occupies residues 38-66 (RTLPGPVTDPSQLPKWNYDGSSTGQAPGE). Positions 106 to 356 (KRHAAAKIFS…IADTTILWKP (251 aa)) constitute a GS catalytic domain.

This sequence belongs to the glutamine synthetase family. In terms of assembly, homooctamer.

It is found in the cytoplasm. The catalysed reaction is L-glutamate + NH4(+) + ATP = L-glutamine + ADP + phosphate + H(+). The polypeptide is Glutamine synthetase cytosolic isozyme (Medicago sativa (Alfalfa)).